Here is a 186-residue protein sequence, read N- to C-terminus: Large ribosomal subunit protein eL18 (186 aa).

The protein belongs to the eukaryotic ribosomal protein eL18 family. As to quaternary structure, component of the large ribosomal subunit. Mature ribosomes consist of a small (40S) and a large (60S) subunit. The 40S subunit contains about 32 different proteins and 1 molecule of RNA (18S). The 60S subunit contains 45 different proteins and 3 molecules of RNA (25S, 5.8S and 5S).

The protein localises to the cytoplasm. In terms of biological role, component of the ribosome, a large ribonucleoprotein complex responsible for the synthesis of proteins in the cell. The small ribosomal subunit (SSU) binds messenger RNAs (mRNAs) and translates the encoded message by selecting cognate aminoacyl-transfer RNA (tRNA) molecules. The large subunit (LSU) contains the ribosomal catalytic site termed the peptidyl transferase center (PTC), which catalyzes the formation of peptide bonds, thereby polymerizing the amino acids delivered by tRNAs into a polypeptide chain. The nascent polypeptides leave the ribosome through a tunnel in the LSU and interact with protein factors that function in enzymatic processing, targeting, and the membrane insertion of nascent chains at the exit of the ribosomal tunnel. The sequence is that of Large ribosomal subunit protein eL18 from Candida albicans (strain SC5314 / ATCC MYA-2876) (Yeast).